Reading from the N-terminus, the 267-residue chain is DCN1-like protein 2 (267 aa).

Positions 1–48 (MTRKYTKKSSGSTASTTNSTAEIVDLTTSTSSVGKKRKSPDEKAQPIT) are disordered. The span at 8-21 (KSSGSTASTTNSTA) shows a compositional bias: low complexity. A DCUN1 domain is found at 75-262 (HYTYLYTYIF…LLDQFSEWVQ (188 aa)).

This Dictyostelium discoideum (Social amoeba) protein is DCN1-like protein 2.